Consider the following 212-residue polypeptide: Pyridoxine/pyridoxamine 5'-phosphate oxidase (212 aa).

Substrate-binding positions include 8–11 (RREY) and K66. FMN-binding positions include 61 to 66 (RIVLLK), 76 to 77 (FT), R82, K83, and Q105. Substrate contacts are provided by Y123, R127, and S131. Residues 140–141 (QS) and W185 contribute to the FMN site. 191-193 (RLH) contacts substrate. R195 provides a ligand contact to FMN.

It belongs to the pyridoxamine 5'-phosphate oxidase family. As to quaternary structure, homodimer. FMN is required as a cofactor.

It catalyses the reaction pyridoxamine 5'-phosphate + O2 + H2O = pyridoxal 5'-phosphate + H2O2 + NH4(+). It carries out the reaction pyridoxine 5'-phosphate + O2 = pyridoxal 5'-phosphate + H2O2. It participates in cofactor metabolism; pyridoxal 5'-phosphate salvage; pyridoxal 5'-phosphate from pyridoxamine 5'-phosphate: step 1/1. It functions in the pathway cofactor metabolism; pyridoxal 5'-phosphate salvage; pyridoxal 5'-phosphate from pyridoxine 5'-phosphate: step 1/1. In terms of biological role, catalyzes the oxidation of either pyridoxine 5'-phosphate (PNP) or pyridoxamine 5'-phosphate (PMP) into pyridoxal 5'-phosphate (PLP). The chain is Pyridoxine/pyridoxamine 5'-phosphate oxidase from Shewanella sp. (strain MR-7).